The following is a 486-amino-acid chain: Cytochrome P450 monooxygenase 1 (486 aa).

The first 21 residues, 1-21, serve as a signal peptide directing secretion; that stretch reads MSHFLPTLILTSLTLVAYVLA. N346 carries an N-linked (GlcNAc...) asparagine glycan. Position 430 (C430) interacts with heme. N-linked (GlcNAc...) asparagine glycosylation occurs at N434.

The protein belongs to the cytochrome P450 family. Heme is required as a cofactor.

It functions in the pathway mycotoxin biosynthesis. In terms of biological role, cytochrome P450 monooxygenase; part of the gene cluster that mediates the biosynthesis of aphidicolin, a specific inhibitor of eukaryotic DNA synthesis and DNA polymerase alpha. The geranylgeranyl pyrophosphate synthase GGS is required for supplying a sufficient amount of geranylgeranyl diphosphate (GGDP), the general precursor of diterpenes. The diterpene synthase ACS then catalyzes the conversion of geranylgeranyl diphosphate to aphidicolan-16-beta-ol via the intermediate syn-copalyldiphosphate (syn-CDP). In addition to aphidicolan-16-beta-ol, the enzyme also produces low levels of amphidicol-15-ene and amphidicol-16-ene. The cytochrome P450 monooxygenase P450-2 then catalyzes the two-step hydroxylation from aphidicolan-16-beta-ol to 3-deoxyaphidicolin via a 17,3-deoxyaphidicolin intermediate. Finally, the cytochrome P450 monooxygenase P450-1 converts 3-deoxyaphidicolin to aphidicolin. This Neocamarosporium betae (Beet black rot fungus) protein is Cytochrome P450 monooxygenase 1 (PbP450-1).